Here is a 360-residue protein sequence, read N- to C-terminus: (+)-6a-hydroxymaackiain 3-O-methyltransferase 1 (360 aa).

S-adenosyl-L-methionine-binding positions include 202-205, D226, 226-227, 246-247, and K260; these read VAGG, DQ, and DM. H264 functions as the Proton acceptor in the catalytic mechanism.

The protein belongs to the class I-like SAM-binding methyltransferase superfamily. Cation-independent O-methyltransferase family. COMT subfamily.

It carries out the reaction (+)-6a-hydroxymaackiain + S-adenosyl-L-methionine = (+)-pisatin + S-adenosyl-L-homocysteine + H(+). The enzyme catalyses a 4'-hydroxyisoflavone + S-adenosyl-L-methionine = a 4'-methoxyisoflavone + S-adenosyl-L-homocysteine + H(+). Functionally, methyltransferase involved in the phytoalexin pisatin biosynthesis. Has both 3- and 4'-O-methyltransferase activities. Can use (+)-6a-hydroxymaackiain, 2,7,4'-trihydroxyisoflavanone and with much less activity (+)-medicarpin as substrates, but not (-)-6a-hydroxymaackiain, daidzein, formononetin or isoliquiritigenin. May be involved in formononetin biosynthesis. In Pisum sativum (Garden pea), this protein is (+)-6a-hydroxymaackiain 3-O-methyltransferase 1 (HMM1).